The following is a 112-amino-acid chain: Nitrogen regulatory protein GlnK1 (112 aa).

Thr29 contributes to the ADP binding site. Positions 29 and 38 each coordinate ATP. 52 to 54 (IVD) provides a ligand contact to 2-oxoglutarate. ADP contacts are provided by residues Val64, 88 to 90 (DGK), and 101 to 103 (RVR). ATP is bound by residues Val64, 86-90 (PGDGK), and 101-103 (RVR).

The protein belongs to the P(II) protein family. Homotrimer. Interacts and forms a complex with Amt1.

It localises to the cytoplasm. Formation of the GlnK1/Amt1 complex is decreased in the presence of Mg-ATP or 2-oxoglutarate. The presence of both effectors abolishes the formation of the complex. Its function is as follows. Involved in the regulation of nitrogen metabolism. Regulates the activity of its targets by protein-protein interaction in response to the nitrogen status of the cell. Regulates the activity of the ammonia channel Amt1 via direct interaction. The polypeptide is Nitrogen regulatory protein GlnK1 (Methanocaldococcus jannaschii (strain ATCC 43067 / DSM 2661 / JAL-1 / JCM 10045 / NBRC 100440) (Methanococcus jannaschii)).